Here is a 304-residue protein sequence, read N- to C-terminus: Sulfate adenylyltransferase subunit 2 (304 aa).

It belongs to the PAPS reductase family. CysD subfamily. Heterodimer composed of CysD, the smaller subunit, and CysN.

The catalysed reaction is sulfate + ATP + H(+) = adenosine 5'-phosphosulfate + diphosphate. The protein operates within sulfur metabolism; hydrogen sulfide biosynthesis; sulfite from sulfate: step 1/3. Functionally, with CysN forms the ATP sulfurylase (ATPS) that catalyzes the adenylation of sulfate producing adenosine 5'-phosphosulfate (APS) and diphosphate, the first enzymatic step in sulfur assimilation pathway. APS synthesis involves the formation of a high-energy phosphoric-sulfuric acid anhydride bond driven by GTP hydrolysis by CysN coupled to ATP hydrolysis by CysD. The polypeptide is Sulfate adenylyltransferase subunit 2 (Halorhodospira halophila (strain DSM 244 / SL1) (Ectothiorhodospira halophila (strain DSM 244 / SL1))).